Consider the following 189-residue polypeptide: MTTDVRILGIDPGLRRTGWGLITARGSKLSYLACGVVTSDGDLPLALRLRELHEGLTRIVTTYTPDEVSVEETFVNKDAQATLKLGHARAVALLVPALAGLPVAEYAANLVKKTVAGNGHAEKVQIQAMVKFLLPKAEFKLADAADALAIAITHASHRGAIALDRRHAVAAGGGPGAARIAAALARLDR.

Catalysis depends on residues Asp-11, Glu-71, and Asp-143. Residues Asp-11, Glu-71, and Asp-143 each contribute to the Mg(2+) site.

It belongs to the RuvC family. Homodimer which binds Holliday junction (HJ) DNA. The HJ becomes 2-fold symmetrical on binding to RuvC with unstacked arms; it has a different conformation from HJ DNA in complex with RuvA. In the full resolvosome a probable DNA-RuvA(4)-RuvB(12)-RuvC(2) complex forms which resolves the HJ. Mg(2+) serves as cofactor.

It localises to the cytoplasm. The enzyme catalyses Endonucleolytic cleavage at a junction such as a reciprocal single-stranded crossover between two homologous DNA duplexes (Holliday junction).. In terms of biological role, the RuvA-RuvB-RuvC complex processes Holliday junction (HJ) DNA during genetic recombination and DNA repair. Endonuclease that resolves HJ intermediates. Cleaves cruciform DNA by making single-stranded nicks across the HJ at symmetrical positions within the homologous arms, yielding a 5'-phosphate and a 3'-hydroxyl group; requires a central core of homology in the junction. The consensus cleavage sequence is 5'-(A/T)TT(C/G)-3'. Cleavage occurs on the 3'-side of the TT dinucleotide at the point of strand exchange. HJ branch migration catalyzed by RuvA-RuvB allows RuvC to scan DNA until it finds its consensus sequence, where it cleaves and resolves the cruciform DNA. In Methylorubrum extorquens (strain CM4 / NCIMB 13688) (Methylobacterium extorquens), this protein is Crossover junction endodeoxyribonuclease RuvC.